A 498-amino-acid polypeptide reads, in one-letter code: ATP synthase subunit beta, chloroplastic (498 aa).

172–179 (GGAGVGKT) lines the ATP pocket.

Belongs to the ATPase alpha/beta chains family. As to quaternary structure, F-type ATPases have 2 components, CF(1) - the catalytic core - and CF(0) - the membrane proton channel. CF(1) has five subunits: alpha(3), beta(3), gamma(1), delta(1), epsilon(1). CF(0) has four main subunits: a(1), b(1), b'(1) and c(9-12).

The protein localises to the plastid. Its subcellular location is the chloroplast thylakoid membrane. It catalyses the reaction ATP + H2O + 4 H(+)(in) = ADP + phosphate + 5 H(+)(out). Produces ATP from ADP in the presence of a proton gradient across the membrane. The catalytic sites are hosted primarily by the beta subunits. The polypeptide is ATP synthase subunit beta, chloroplastic (Calycanthus floridus (Eastern sweetshrub)).